A 134-amino-acid chain; its full sequence is ATP synthase epsilon chain (134 aa).

The interval 100-134 is disordered; it reads NQKLQNENLSEEEKEHYEKQRSRSQALLNLASAKV. A compositionally biased stretch (basic and acidic residues) spans 110-120; sequence EEEKEHYEKQR.

The protein belongs to the ATPase epsilon chain family. In terms of assembly, F-type ATPases have 2 components, CF(1) - the catalytic core - and CF(0) - the membrane proton channel. CF(1) has five subunits: alpha(3), beta(3), gamma(1), delta(1), epsilon(1). CF(0) has three main subunits: a, b and c.

Its subcellular location is the cell inner membrane. Functionally, produces ATP from ADP in the presence of a proton gradient across the membrane. The chain is ATP synthase epsilon chain from Sulfurihydrogenibium sp. (strain YO3AOP1).